The sequence spans 162 residues: Interleukin-15 (162 aa).

Positions 1–29 are cleaved as a signal peptide; the sequence is MRILKPYLRSTSIQCYLCLLLNSHFLTEA. The propeptide occupies 30-48; sequence GIHVFILGCISASLPKTEA. Intrachain disulfides connect Cys-83–Cys-133 and Cys-90–Cys-136. Residues Asn-104, Asn-113, Asn-121, and Asn-127 are each glycosylated (N-linked (GlcNAc...) asparagine).

It belongs to the IL-15/IL-21 family.

The protein localises to the secreted. Cytokine that plays a major role in the development of inflammatory and protective immune responses to microbial invaders and parasites by modulating immune cells of both the innate and adaptive immune systems. Stimulates the proliferation of natural killer cells, T-cells and B-cells and promotes the secretion of several cytokines. In monocytes, induces the production of IL8 and monocyte chemotactic protein 1/CCL2, two chemokines that attract neutrophils and monocytes respectively to sites of infection. Unlike most cytokines, which are secreted in soluble form, IL15 is expressed in association with its high affinity IL15RA on the surface of IL15-producing cells and delivers signals to target cells that express IL2RB and IL2RG receptor subunits. Binding to its receptor triggers the phosphorylation of JAK1 and JAK3 and the recruitment and subsequent phosphorylation of signal transducer and activator of transcription-3/STAT3 and STAT5. In mast cells, induces the rapid tyrosine phosphorylation of STAT6 and thereby controls mast cell survival and release of cytokines such as IL4. In Bos taurus (Bovine), this protein is Interleukin-15 (IL15).